The chain runs to 305 residues: tRNA dimethylallyltransferase (305 aa).

8-15 (GPTAVGKT) contributes to the ATP binding site. 10–15 (TAVGKT) is a binding site for substrate. An interaction with substrate tRNA region spans residues 33-36 (DSRQ).

The protein belongs to the IPP transferase family. Monomer. Mg(2+) serves as cofactor.

It catalyses the reaction adenosine(37) in tRNA + dimethylallyl diphosphate = N(6)-dimethylallyladenosine(37) in tRNA + diphosphate. Functionally, catalyzes the transfer of a dimethylallyl group onto the adenine at position 37 in tRNAs that read codons beginning with uridine, leading to the formation of N6-(dimethylallyl)adenosine (i(6)A). The sequence is that of tRNA dimethylallyltransferase from Thermotoga neapolitana (strain ATCC 49049 / DSM 4359 / NBRC 107923 / NS-E).